The following is a 279-amino-acid chain: Protein BASIC PENTACYSTEINE2 (279 aa).

The disordered stretch occupies residues 126-167; that stretch reads TKKRKTNAKAGSTPKAKKPRKPKDENSNNNNNNNTNVTRVKP. Residues 152-161 show a composition bias toward low complexity; the sequence is SNNNNNNNTN.

It belongs to the BBR/BPC family. Expressed in seedlings, leaves and pistils. Detected in the base of flowers and tips of carpels, in sepal and petal vasculature, in pollen grains, in young rosette, in the lateral and tip of primary roots, and in ovule at the exception of the outer integument.

The protein resides in the nucleus. In terms of biological role, transcriptional regulator that specifically binds to GA-rich elements (GAGA-repeats) present in regulatory sequences of genes involved in developmental processes. This Arabidopsis thaliana (Mouse-ear cress) protein is Protein BASIC PENTACYSTEINE2.